A 282-amino-acid polypeptide reads, in one-letter code: 4-diphosphocytidyl-2-C-methyl-D-erythritol kinase (282 aa).

K12 is an active-site residue. 95–105 is a binding site for ATP; sequence PMGGGIGGGSS. Residue D137 is part of the active site.

This sequence belongs to the GHMP kinase family. IspE subfamily.

The enzyme catalyses 4-CDP-2-C-methyl-D-erythritol + ATP = 4-CDP-2-C-methyl-D-erythritol 2-phosphate + ADP + H(+). It participates in isoprenoid biosynthesis; isopentenyl diphosphate biosynthesis via DXP pathway; isopentenyl diphosphate from 1-deoxy-D-xylulose 5-phosphate: step 3/6. In terms of biological role, catalyzes the phosphorylation of the position 2 hydroxy group of 4-diphosphocytidyl-2C-methyl-D-erythritol. This chain is 4-diphosphocytidyl-2-C-methyl-D-erythritol kinase, found in Pseudomonas aeruginosa (strain ATCC 15692 / DSM 22644 / CIP 104116 / JCM 14847 / LMG 12228 / 1C / PRS 101 / PAO1).